A 396-amino-acid polypeptide reads, in one-letter code: NADH-quinone oxidoreductase subunit D 1 (396 aa).

The protein belongs to the complex I 49 kDa subunit family. NDH-1 is composed of 14 different subunits. Subunits NuoB, C, D, E, F, and G constitute the peripheral sector of the complex.

It is found in the cell inner membrane. It carries out the reaction a quinone + NADH + 5 H(+)(in) = a quinol + NAD(+) + 4 H(+)(out). Its function is as follows. NDH-1 shuttles electrons from NADH, via FMN and iron-sulfur (Fe-S) centers, to quinones in the respiratory chain. The immediate electron acceptor for the enzyme in this species is believed to be ubiquinone. Couples the redox reaction to proton translocation (for every two electrons transferred, four hydrogen ions are translocated across the cytoplasmic membrane), and thus conserves the redox energy in a proton gradient. The protein is NADH-quinone oxidoreductase subunit D 1 of Nitrobacter hamburgensis (strain DSM 10229 / NCIMB 13809 / X14).